We begin with the raw amino-acid sequence, 173 residues long: Alpha-crystallin A chain (173 aa).

M1 is modified (N-acetylmethionine). One can recognise a sHSP domain in the interval 53–164 (NFLDSSNSGM…GDRSIPVTRD (112 aa)). 3 residues coordinate Zn(2+): H101, E103, and H108. C132 and C143 are disulfide-bonded. The disordered stretch occupies residues 143 to 173 (CGPKSGGSESGRGDRSIPVTRDDKTNSTPSS). Over residues 153–167 (GRGDRSIPVTRDDKT) the composition is skewed to basic and acidic residues.

Belongs to the small heat shock protein (HSP20) family. In terms of assembly, heteropolymer composed of three CRYAA and one CRYAB subunits. Inter-subunit bridging via zinc ions enhances stability, which is crucial as there is no protein turn over in the lens. Zinc coordination is achieved at least by His-101, Glu-103 and His-108. His-101 and Glu-103 come from the same molecule within the oligomer, while His-108 residue is provided by another molecule. Can also form homodimers and homotetramers (dimers of dimers) which serve as the building blocks of homooligomers. Part of a complex required for lens intermediate filament formation composed of BFSP1, BFSP2 and CRYAA.

The protein resides in the cytoplasm. The protein localises to the nucleus. In terms of biological role, contributes to the transparency and refractive index of the lens. May act as a chaperone, preventing aggregation of various proteins under a wide range of stress conditions. The polypeptide is Alpha-crystallin A chain (cryaa) (Psalidodon fasciatus (Banded astyanax)).